Consider the following 438-residue polypeptide: Methylenetetrahydrofolate--tRNA-(uracil-5-)-methyltransferase TrmFO (438 aa).

An FAD-binding site is contributed by 9-14; it reads GGGLAG.

Belongs to the MnmG family. TrmFO subfamily. FAD serves as cofactor.

Its subcellular location is the cytoplasm. It carries out the reaction uridine(54) in tRNA + (6R)-5,10-methylene-5,6,7,8-tetrahydrofolate + NADH + H(+) = 5-methyluridine(54) in tRNA + (6S)-5,6,7,8-tetrahydrofolate + NAD(+). The catalysed reaction is uridine(54) in tRNA + (6R)-5,10-methylene-5,6,7,8-tetrahydrofolate + NADPH + H(+) = 5-methyluridine(54) in tRNA + (6S)-5,6,7,8-tetrahydrofolate + NADP(+). In terms of biological role, catalyzes the folate-dependent formation of 5-methyl-uridine at position 54 (M-5-U54) in all tRNAs. The protein is Methylenetetrahydrofolate--tRNA-(uracil-5-)-methyltransferase TrmFO of Lactobacillus gasseri (strain ATCC 33323 / DSM 20243 / BCRC 14619 / CIP 102991 / JCM 1131 / KCTC 3163 / NCIMB 11718 / NCTC 13722 / AM63).